We begin with the raw amino-acid sequence, 514 residues long: Folylpolyglutamate synthase (514 aa).

Gly82–Ser85 is an ATP binding site. Residues Ser107, Glu186, and His214 each contribute to the Mg(2+) site. ATP contacts are provided by Arg339 and Asp355.

This sequence belongs to the folylpolyglutamate synthase family. The cofactor is a monovalent cation.

Its subcellular location is the mitochondrion inner membrane. The protein localises to the mitochondrion matrix. The protein resides in the cytoplasm. It catalyses the reaction (6S)-5,6,7,8-tetrahydrofolyl-(gamma-L-Glu)(n) + L-glutamate + ATP = (6S)-5,6,7,8-tetrahydrofolyl-(gamma-L-Glu)(n+1) + ADP + phosphate + H(+). The protein operates within cofactor biosynthesis; tetrahydrofolylpolyglutamate biosynthesis. Its function is as follows. Catalyzes conversion of folates to polyglutamate derivatives allowing concentration of folate compounds in the cell and the intracellular retention of these cofactors, which are important substrates for most of the folate-dependent enzymes that are involved in one-carbon transfer reactions involved in purine, pyrimidine and amino acid synthesis. This Candida albicans (Yeast) protein is Folylpolyglutamate synthase (MET7).